The following is a 212-amino-acid chain: MAKQYDVLFRLLLIGDSGVGKTCLLCRFTDNEFHSSHISTIGVDFKMKTIEVDGIKVRIQIWDTAGQERYQTITKQYYRRAQGIFLVYDISSERSYQHIMKWVSDVDEYAPEGVQKILIGNKADEEQKRQVGREQGQQLAKEYGMDFYETSACTNLNIKESFTRLTELVLQAHRKELDGLRTCASNELALAELEEDEGKTEGPANSSKTCWC.

The GTP site is built by S17, G18, V19, G20, K21, T22, C23, S35, S39, and T40. T22 serves as a coordination point for Mg(2+). 2 short sequence motifs (switch) span residues 31 to 45 and 63 to 80; these read NEFH…GVDF and DTAG…YYRR. Residues T40 and D63 each coordinate Mg(2+). Positions 66, 121, 122, 124, 151, and 152 each coordinate GTP. 2 S-geranylgeranyl cysteine lipidation sites follow: C210 and C212. C212 carries the post-translational modification Cysteine methyl ester.

This sequence belongs to the small GTPase superfamily. Rab family. In terms of assembly, the GTP bound form of RAB15 interacts with REP15. Interacts (GTP-bound form) with MICAL1, MICAL3, MICALCL, EHBP1 and EHBP1L1. The cofactor is Mg(2+). As to expression, expressed predominantly in neural tissues.

Its subcellular location is the cell membrane. The enzyme catalyses GTP + H2O = GDP + phosphate + H(+). With respect to regulation, regulated by guanine nucleotide exchange factors (GEFs) which promote the exchange of bound GDP for free GTP. Regulated by GTPase activating proteins (GAPs) which increase the GTP hydrolysis activity. Inhibited by GDP dissociation inhibitors (GDIs). Its function is as follows. The small GTPases Rab are key regulators of intracellular membrane trafficking, from the formation of transport vesicles to their fusion with membranes. Rabs cycle between an inactive GDP-bound form and an active GTP-bound form that is able to recruit to membranes different sets of downstream effectors directly responsible for vesicle formation, movement, tethering and fusion. RAB15 may act in concert with RAB3A in regulating aspects of synaptic vesicle membrane flow within the nerve terminal. The chain is Ras-related protein Rab-15 from Rattus norvegicus (Rat).